Reading from the N-terminus, the 95-residue chain is Transcription and mRNA export factor ENY2-2 (95 aa).

This sequence belongs to the ENY2 family. As to quaternary structure, component of the nuclear pore complex (NPC)-associated TREX-2 complex (transcription and export complex 2). Component of the SAGA transcription coactivator-HAT complex. Within the SAGA complex, participates in a subcomplex of SAGA called the DUB module (deubiquitination module).

The protein localises to the nucleus. It is found in the nucleoplasm. Its function is as follows. Involved in mRNA export coupled transcription activation by association with both the TREX-2 and the SAGA complexes. The transcription regulatory histone acetylation (HAT) complex SAGA is a multiprotein complex that activates transcription by remodeling chromatin and mediating histone acetylation and deubiquitination. Within the SAGA complex, participates in a subcomplex that specifically deubiquitinates histones. The SAGA complex is recruited to specific gene promoters by activators, where it is required for transcription. The TREX-2 complex functions in docking export-competent ribonucleoprotein particles (mRNPs) to the nuclear entrance of the nuclear pore complex (nuclear basket). TREX-2 participates in mRNA export and accurate chromatin positioning in the nucleus by tethering genes to the nuclear periphery. This Salmo salar (Atlantic salmon) protein is Transcription and mRNA export factor ENY2-2 (eny2-2).